Here is a 165-residue protein sequence, read N- to C-terminus: Cyanate hydratase (165 aa).

Active-site residues include arginine 106, glutamate 109, and serine 132.

Belongs to the cyanase family.

It carries out the reaction cyanate + hydrogencarbonate + 3 H(+) = NH4(+) + 2 CO2. Catalyzes the reaction of cyanate with bicarbonate to produce ammonia and carbon dioxide. The chain is Cyanate hydratase from Laccaria bicolor (strain S238N-H82 / ATCC MYA-4686) (Bicoloured deceiver).